We begin with the raw amino-acid sequence, 172 residues long: Stellate protein CG33239/CG33241 (172 aa).

This sequence belongs to the casein kinase 2 subunit beta family. Interacts in vitro with the casein kinase 2 alpha subunit (CkII-alpha). The relevance of such interaction is however unclear in vivo. Probably not expressed in wild-type flies. In males lacking the Y chromosome, it is testis-specific and constitutes the main component of star-shaped crystals.

Functionally, unknown. In males lacking the Y chromosome, its strong overexpression leads to the appearance of proteinaceous star-shaped crystals in the primary spermatocytes causing meiotic drive, possibly by interfering with normal casein kinase 2 activity. This is Stellate protein CG33239/CG33241 (Ste:CG33239) from Drosophila melanogaster (Fruit fly).